Reading from the N-terminus, the 576-residue chain is Threonine dehydratase, mitochondrial (576 aa).

At K109 the chain carries N6-(pyridoxal phosphate)lysine. ACT-like domains lie at 393–473 (VFML…DISD) and 495–566 (RIIS…DETD).

This sequence belongs to the serine/threonine dehydratase family. In terms of assembly, homotetramer. Requires pyridoxal 5'-phosphate as cofactor.

The protein resides in the mitochondrion. It catalyses the reaction L-threonine = 2-oxobutanoate + NH4(+). The protein operates within amino-acid biosynthesis; L-isoleucine biosynthesis; 2-oxobutanoate from L-threonine: step 1/1. With respect to regulation, isoleucine allosterically inhibits while valine allosterically activates this enzyme. In Saccharomyces cerevisiae (strain ATCC 204508 / S288c) (Baker's yeast), this protein is Threonine dehydratase, mitochondrial (ILV1).